The chain runs to 144 residues: Transcriptional regulator MraZ (144 aa).

2 consecutive SpoVT-AbrB domains span residues 6 to 48 (TYTP…PTDV) and 77 to 120 (ADEG…DPVR).

Belongs to the MraZ family. In terms of assembly, forms oligomers.

It is found in the cytoplasm. It localises to the nucleoid. This chain is Transcriptional regulator MraZ, found in Nocardioides sp. (strain ATCC BAA-499 / JS614).